The following is a 59-amino-acid chain: Metallothionein-1B (59 aa).

Positions 1 to 29 are beta; sequence MPGPCCNDKCVCQEGGCKAGCQCTSCRCS. 17 residues coordinate a divalent metal cation: Cys-5, Cys-6, Cys-10, Cys-17, Cys-21, Cys-23, Cys-26, Cys-28, Cys-31, Cys-34, Cys-38, Cys-40, Cys-46, Cys-50, Cys-54, Cys-56, and Cys-57. The interval 30–59 is alpha; that stretch reads PCQKCTSGCKCATKEECSKTCTKPCSCCPK.

This sequence belongs to the metallothionein superfamily. Type 3 family.

Binds six divalent metal ions. Known to bind copper and cadmium. This is Metallothionein-1B from Callinectes sapidus (Blue crab).